The sequence spans 159 residues: Capsid protein (159 aa).

It belongs to the virgaviridae capsid protein family.

It is found in the virion. Functionally, capsid protein self-assembles to form rod-shaped virions about 18 nm in diameter with a central canal enclosing the viral genomic RNA. This chain is Capsid protein (CP), found in Tomato mosaic virus (strain Kazakh K1) (ToMV).